The primary structure comprises 311 residues: Trem-like transcript 1 protein (311 aa).

Positions 1-15 (MGLTLLLLLLLGLEG) are cleaved as a signal peptide. The 106-residue stretch at 16–121 (QGIVGSLPEV…PQILHRVSLN (106 aa)) folds into the Ig-like V-type domain. Topologically, residues 16–162 (QGIVGSLPEV…EPSQDEKSIP (147 aa)) are extracellular. Disulfide bonds link C38/C104 and C52/C59. Residues 163–183 (LIWGAVLLVGLLVAAVVLFAV) form a helical membrane-spanning segment. Over 184 to 311 (MAKRKQGNRL…NPPNNQTPSS (128 aa)) the chain is Cytoplasmic. Residue C196 is the site of S-palmitoyl cysteine attachment. A disordered region spans residues 229 to 263 (VPHIRLDSPPSFDNTTYTSLPLDSPSGKPSLPAPS). Positions 239–249 (SFDNTTYTSLP) are enriched in polar residues. The short motif at 279–284 (VTYATV) is the ITIM element. Residues 287-311 (PGGNKGGGTSCGPAQNPPNNQTPSS) are disordered.

In terms of assembly, when phosphorylated, interacts with PTPN6. When phosphorylated, interacts with PTPN11. Post-translationally, phosphorylated on tyrosine residues. Detected in platelets, monocytic leukemia and in T-cell leukemia.

The protein localises to the cell membrane. Its subcellular location is the cytoplasm. Its function is as follows. Cell surface receptor that may play a role in the innate and adaptive immune response. This chain is Trem-like transcript 1 protein (TREML1), found in Homo sapiens (Human).